The primary structure comprises 521 residues: Bifunctional purine biosynthesis protein PurH (521 aa).

In terms of domain architecture, MGS-like spans 1 to 145 (MIKQALISVS…KNHRDVTVVV (145 aa)).

This sequence belongs to the PurH family.

The catalysed reaction is (6R)-10-formyltetrahydrofolate + 5-amino-1-(5-phospho-beta-D-ribosyl)imidazole-4-carboxamide = 5-formamido-1-(5-phospho-D-ribosyl)imidazole-4-carboxamide + (6S)-5,6,7,8-tetrahydrofolate. It carries out the reaction IMP + H2O = 5-formamido-1-(5-phospho-D-ribosyl)imidazole-4-carboxamide. It functions in the pathway purine metabolism; IMP biosynthesis via de novo pathway; 5-formamido-1-(5-phospho-D-ribosyl)imidazole-4-carboxamide from 5-amino-1-(5-phospho-D-ribosyl)imidazole-4-carboxamide (10-formyl THF route): step 1/1. It participates in purine metabolism; IMP biosynthesis via de novo pathway; IMP from 5-formamido-1-(5-phospho-D-ribosyl)imidazole-4-carboxamide: step 1/1. The sequence is that of Bifunctional purine biosynthesis protein PurH from Burkholderia cenocepacia (strain HI2424).